A 184-amino-acid chain; its full sequence is Protein GrpE (184 aa).

Over residues 1-12 (MADEQLNEKDLN) the composition is skewed to basic and acidic residues. A disordered region spans residues 1–22 (MADEQLNEKDLNAEEAGAVDNG).

Belongs to the GrpE family. Homodimer.

It localises to the cytoplasm. Its function is as follows. Participates actively in the response to hyperosmotic and heat shock by preventing the aggregation of stress-denatured proteins, in association with DnaK and GrpE. It is the nucleotide exchange factor for DnaK and may function as a thermosensor. Unfolded proteins bind initially to DnaJ; upon interaction with the DnaJ-bound protein, DnaK hydrolyzes its bound ATP, resulting in the formation of a stable complex. GrpE releases ADP from DnaK; ATP binding to DnaK triggers the release of the substrate protein, thus completing the reaction cycle. Several rounds of ATP-dependent interactions between DnaJ, DnaK and GrpE are required for fully efficient folding. The chain is Protein GrpE from Pseudomonas putida (strain W619).